Reading from the N-terminus, the 408-residue chain is NADH-quinone oxidoreductase subunit D (408 aa).

The protein belongs to the complex I 49 kDa subunit family. NDH-1 is composed of 14 different subunits. Subunits NuoB, C, D, E, F, and G constitute the peripheral sector of the complex.

It localises to the cell inner membrane. The enzyme catalyses a quinone + NADH + 5 H(+)(in) = a quinol + NAD(+) + 4 H(+)(out). Its function is as follows. NDH-1 shuttles electrons from NADH, via FMN and iron-sulfur (Fe-S) centers, to quinones in the respiratory chain. The immediate electron acceptor for the enzyme in this species is believed to be ubiquinone. Couples the redox reaction to proton translocation (for every two electrons transferred, four hydrogen ions are translocated across the cytoplasmic membrane), and thus conserves the redox energy in a proton gradient. In Campylobacter jejuni subsp. jejuni serotype O:23/36 (strain 81-176), this protein is NADH-quinone oxidoreductase subunit D.